The following is a 360-amino-acid chain: 3-dehydroquinate synthase (360 aa).

Residues 71 to 76 (DGEQYK), 105 to 109 (GVVGD), 129 to 130 (TT), Lys142, Lys151, and 169 to 172 (TLNT) each bind NAD(+). Zn(2+) is bound by residues Glu184, His248, and His265.

This sequence belongs to the sugar phosphate cyclases superfamily. Dehydroquinate synthase family. It depends on Co(2+) as a cofactor. The cofactor is Zn(2+). NAD(+) serves as cofactor.

It is found in the cytoplasm. The catalysed reaction is 7-phospho-2-dehydro-3-deoxy-D-arabino-heptonate = 3-dehydroquinate + phosphate. It participates in metabolic intermediate biosynthesis; chorismate biosynthesis; chorismate from D-erythrose 4-phosphate and phosphoenolpyruvate: step 2/7. Functionally, catalyzes the conversion of 3-deoxy-D-arabino-heptulosonate 7-phosphate (DAHP) to dehydroquinate (DHQ). This chain is 3-dehydroquinate synthase, found in Coxiella burnetii (strain RSA 331 / Henzerling II).